The chain runs to 2039 residues: MQGRKRTLTEPFEPNTNPFGDNAAVMTENVEDNSETDGNRLESKPQALVPPALNIVPPESSIHSTEEKKGDEYNGNDKDSSLISNIFRTRVGRSSHENLSRPKLSLKTASFGAAESSRRNVSPSTKSAKSSSQYIDLNDERLRRRSFSSYSRSSSRRVSNSPSSTDRPPRSAKVLSLIAADDMDDFEDLQKGFKSAIDEEGLTWLPQLKSEKSRPVSDVGEDRGEGEQESIPDVHTPNVGASATPGSIHLTPEPAQNGSVSEGLEGSINNSRKKPSPKFFHHLSPQKEDKDQTEVIEYAEDILDFETLQRKLESRPFVLYGHSLGVFSPTNPLRIKIARFLLHRRYSLLYNTLLTFYAILLAIRTYNPHNVVFLYRFSNWTDYFIFILSACFTGNDIAKIIAFGFWDDSEMFKAYGREYKSILQRSGIMKLYIYLREKYGRKLIDFIIPFRIISPGEETKYQRSSLSTSLTKPYGAKENQRPFGTPRAFARSSWNRIDLVSSVSFWLGMFLSIKSYDTKTGIRIFKPLAILRILRLVNVDTGMPSILRGLKYGIPQLVNVSSMLVYFWIFFGILGVQIFQGSFRRQCVWFNPEDPTDTYQYDMQFCGGYLDPVTKRKQNYIYEDGSEGSVSKGFLCPQYSKCVSNANPYNGRISFDNIVNSMELVFVIMSANTFTDLMYYTMDSDEMAACLFFIVCIFVLTIWLLNLLIAVLVSSFEIANEEYKKKKFIYGSRKTGYVARIVTGYWKYFKLKANQTKFPNWSQKGLAIYSHVEFIFVILIICDIGMRASVKVSTSANCNNILLKTDRGISIVLFIESLARLVLYLPNMWKFLTKPSYVYDFIISIITLVISCLAVEGVLGHMYAWLSIFHISRFYRVIISFNLTKKLWKQILSNGVMIWNLSSFYFFFTFLVAIIMAVYFEGVIPPEEMADQPFGMYSLPNSFLSLFIIGSTENWTDILYALQKHSPNISSTFFCSVFFIIWFLLSNSVILNIFIALISESMEVKEEEKRPQQIKHYLKFVYPQKIQEYTHASLVARIRKKFFGGHRNEDTRDFKQFLMRGTAIMNIAQNMGELADEFKEPPSENLFKKGLSKLTIGVPSLKRLRMFANNPFYKNSDVVFTETNDINGRTYILELNEYEDEKLDYLKKYPLFNYSYYFFSPQHRFRRFCQRLVPPSTGKRTDGSRFFEDSTDLYNKRSYFHHIERDVFVFIFALATILLIVCSCYVTPLYRMHHKMGTWNWSSALDCAFIGAFSIEFIVKTVADGFIYSPNAYLRNPWNFIDFCVLISMWINLIAYLKNNGNLSRIFKGLTALRALRCLTISNTARQTFNLVMFDGLNKIFEAGLISLSLLFPFTVWGLSIFKGRLGTCNDGSLGRADCYNEYSNSVFQWDIMSPRVYQQPYLHLDSFASAFSSLYQIISLEGWVDLLENMMNSSGIGTPATVMGSAGNALFLVLFNFLSMVFILNLFVSFIVNNQARTTGSAYFTIEEKAWLESQKLLSQAKPKAIPNLIELSRVRQFFYQLAVEKKNFYYASFLQVVLYLHIIMLLSRSYNPGNLIGYQGVYFMFSTSVFLIQEALHMCGEGPRLYFRQKWNSIRLSIIIIAFIMNAVAFHVPASHYWFHNIKGFFLLVIFLFIIPQNDTLTELLETAMASLPPILSLTYTWGVLFLVYAIALNQIFGLTRLGSNTTDNINFRTVIKSMIVLFRCSFGEGWNYIMADLTVSEPYCSSDDNSTYTDCGSETYAYLLLMSWNIISMYIFVNMFVSLIIGNFSYVYRSGGSRSGINRSEIKKYIEAWSKFDTDGTGELELSYLPRIMHSFDGPLSFKIWEGRLTIKSLVENYMEVNPDDPYDVKIDLIGLNKELNTIDKAKIIQRKLQYRRFVQSIHYTNAYNGCIRFSDLLLQIPLYTAYSARECLGIDQYVHHLYILGKVDKYLENQRNFDVLEMVVTRWKFHCRMKRTIEPEWDVKDPTVSSHISNINVNLEPAPGILEREPIATPRMDYGVNNFMWSPRMNQDSTMEPPEEPIDNNDDSANDLIDR.

Disordered stretches follow at residues 1–171 and 206–288; these read MQGR…PPRS and PQLK…PQKE. The segment covering 64-80 has biased composition (basic and acidic residues); that stretch reads STEEKKGDEYNGNDKDS. A glycan (N-linked (GlcNAc...) asparagine) is linked at N98. Composition is skewed to low complexity over residues 122–132 and 147–164; these read SPSTKSAKSSS and FSSY…SPSS. Residues 209 to 226 are compositionally biased toward basic and acidic residues; the sequence is KSEKSRPVSDVGEDRGEG. N257 and N269 each carry an N-linked (GlcNAc...) asparagine glycan. The segment covering 271-281 has biased composition (basic residues); it reads SRKKPSPKFFH. Phosphoserine is present on S284. A helical membrane pass occupies residues 346-366; that stretch reads YSLLYNTLLTFYAILLAIRTY. N379 carries N-linked (GlcNAc...) asparagine glycosylation. Residues 384–404 traverse the membrane as a helical segment; sequence FIFILSACFTGNDIAKIIAFG. Residue N559 is glycosylated (N-linked (GlcNAc...) asparagine). The next 3 membrane-spanning stretches (helical) occupy residues 563–583, 658–678, and 691–711; these read MLVY…QGSF, IVNS…TDLM, and LFFI…LIAV. 2 N-linked (GlcNAc...) asparagine glycosylation sites follow: N754 and N760. The next 3 helical transmembrane spans lie at 766–786, 809–829, and 841–861; these read LAIY…DIGM, ISIV…PNMW, and FIIS…VLGH. 2 N-linked (GlcNAc...) asparagine glycosylation sites follow: N882 and N900. A run of 2 helical transmembrane segments spans residues 904-924 and 942-962; these read FYFF…EGVI and SFLS…LYAL. N-linked (GlcNAc...) asparagine glycosylation occurs at N968. A helical transmembrane segment spans residues 978–998; it reads FFIIWFLLSNSVILNIFIALI. A glycan (N-linked (GlcNAc...) asparagine) is linked at N1153. The helical transmembrane segment at 1207 to 1227 threads the bilayer; it reads VFVFIFALATILLIVCSCYVT. N-linked (GlcNAc...) asparagine glycosylation is present at N1240. The next 2 helical transmembrane spans lie at 1247 to 1267 and 1277 to 1297; these read CAFI…DGFI and PWNF…IAYL. N-linked (GlcNAc...) asparagine glycosylation is present at N1302. 2 helical membrane-spanning segments follow: residues 1340-1360 and 1408-1428; these read IFEA…WGLS and FASA…VDLL. Residue N1433 is glycosylated (N-linked (GlcNAc...) asparagine). 5 consecutive transmembrane segments (helical) span residues 1452-1472, 1529-1549, 1554-1574, 1596-1616, and 1618-1638; these read FLVL…VSFI, NFYY…MLLS, PGNL…VFLI, IRLS…HVPA, and HYWF…FIIP. The N-linked (GlcNAc...) asparagine glycan is linked to N1640. The chain crosses the membrane as a helical span at residues 1654 to 1674; that stretch reads LPPILSLTYTWGVLFLVYAIA. N-linked (GlcNAc...) asparagine glycans are attached at residues N1687 and N1732. The chain crosses the membrane as a helical span at residues 1748–1768; sequence LMSWNIISMYIFVNMFVSLII. N1770 and N1785 each carry an N-linked (GlcNAc...) asparagine glycan. An EF-hand domain is found at 1787–1822; that stretch reads SEIKKYIEAWSKFDTDGTGELELSYLPRIMHSFDGP. The interval 2011–2039 is disordered; that stretch reads PRMNQDSTMEPPEEPIDNNDDSANDLIDR. The span at 2021–2033 shows a compositional bias: acidic residues; the sequence is PPEEPIDNNDDSA.

The protein belongs to the calcium channel alpha-1 subunit (TC 1.A.1.11) family. As to quaternary structure, interacts with MID1 to form a Ca(2+) influx channel.

The protein resides in the cell membrane. Voltage-gated, high-affinity calcium channel that functions together with MID1 to mediate calcium entry into cells. Required during conditions of environmental stress. This chain is Calcium-channel protein CCH1 (CCH1), found in Saccharomyces cerevisiae (strain ATCC 204508 / S288c) (Baker's yeast).